The sequence spans 376 residues: MTPNDDDDTKVITFSSDYPDTDYRFLEANQEILDQIKNNKKLVIKGSLTDEAVLCTDDKTFTIRAGHTSNSMLLVSKDTNKIKVALQYHLELTEIQPKLNVLKDLLYSKAIDNSLDFEDDENLLGFSFDEIIDRIQSSEKEIQQYLLKLNTLIYKNRYIVLSENYEFKILELILSEATIGAWKLDNIPIDKCIENIRAPEFIIKHCLQLYSKQKSPTNSGGGGEEIKGGGGDDNNDENICSLDFNKVCIFRAKQLLTLSNKSNMKFEDFMDNWKDTLPIEIQPNFSMLKGIAILIPSSSTNPKEKSVKFINESILPTIPKARFKELFQISTRWSIDDIEPFIKSTIPPGNSLEQFILTYSRPITTSTGEKMIVTRF.

The disordered stretch occupies residues 213–232 (QKSPTNSGGGGEEIKGGGGD). Gly residues predominate over residues 219–232 (SGGGGEEIKGGGGD).

This sequence belongs to the DCC1 family.

It is found in the nucleus. Loads PCNA onto primed templates regulating velocity, spacing and restart activity of replication forks. May couple DNA replication to sister chromatid cohesion. In Dictyostelium discoideum (Social amoeba), this protein is Probable sister chromatid cohesion protein DCC1.